Reading from the N-terminus, the 447-residue chain is Tubulin beta-1 chain (447 aa).

Residues glutamine 11, glutamate 69, serine 138, glycine 142, threonine 143, glycine 144, asparagine 204, and asparagine 226 each coordinate GTP. Glutamate 69 is a Mg(2+) binding site.

This sequence belongs to the tubulin family. As to quaternary structure, dimer of alpha and beta chains. A typical microtubule is a hollow water-filled tube with an outer diameter of 25 nm and an inner diameter of 15 nM. Alpha-beta heterodimers associate head-to-tail to form protofilaments running lengthwise along the microtubule wall with the beta-tubulin subunit facing the microtubule plus end conferring a structural polarity. Microtubules usually have 13 protofilaments but different protofilament numbers can be found in some organisms and specialized cells. The cofactor is Mg(2+).

It localises to the cytoplasm. Its subcellular location is the cytoskeleton. In terms of biological role, tubulin is the major constituent of microtubules, a cylinder consisting of laterally associated linear protofilaments composed of alpha- and beta-tubulin heterodimers. Microtubules grow by the addition of GTP-tubulin dimers to the microtubule end, where a stabilizing cap forms. Below the cap, tubulin dimers are in GDP-bound state, owing to GTPase activity of alpha-tubulin. This chain is Tubulin beta-1 chain, found in Geotrichum candidum (Oospora lactis).